A 215-amino-acid chain; its full sequence is MOB kinase activator-like 1B (215 aa).

A disordered region spans residues 1 to 25 (MSLFGLGRNQKTFRPKKSAPSGTKG). Residues cysteine 79, cysteine 84, histidine 161, and histidine 166 each contribute to the Zn(2+) site.

This sequence belongs to the MOB1/phocein family. In terms of assembly, interacts with SIK1. In terms of tissue distribution, expression is detected along the vasculature in cotyledons, hypocotyls and roots of 3- to 4-day-old seedlings.

The polypeptide is MOB kinase activator-like 1B (Arabidopsis thaliana (Mouse-ear cress)).